The chain runs to 549 residues: Cation/acetate symporter ActP (549 aa).

13 consecutive transmembrane segments (helical) span residues 32–54 (IQAI…WASK), 75–97 (GMAI…LVYT), 102–124 (GLIY…AERL), 145–167 (IRIL…QMVG), 182–204 (VAVV…LATT), 211–233 (AILL…NFNF), 263–285 (ALSL…MRFF), 298–320 (FYAT…GAIL), 361–383 (AVAF…SAVS), 404–423 (VSKI…GILF), 428–450 (IAFM…ILLS), 462–484 (LVGG…TIWV), and 494–516 (YPYE…LFSI).

Belongs to the sodium:solute symporter (SSF) (TC 2.A.21) family.

Its subcellular location is the cell inner membrane. Its function is as follows. Transports acetate. In Photorhabdus laumondii subsp. laumondii (strain DSM 15139 / CIP 105565 / TT01) (Photorhabdus luminescens subsp. laumondii), this protein is Cation/acetate symporter ActP.